We begin with the raw amino-acid sequence, 111 residues long: Ribosome-binding factor A (111 aa).

Belongs to the RbfA family. In terms of assembly, monomer. Binds 30S ribosomal subunits, but not 50S ribosomal subunits or 70S ribosomes.

The protein localises to the cytoplasm. In terms of biological role, one of several proteins that assist in the late maturation steps of the functional core of the 30S ribosomal subunit. Associates with free 30S ribosomal subunits (but not with 30S subunits that are part of 70S ribosomes or polysomes). Required for efficient processing of 16S rRNA. May interact with the 5'-terminal helix region of 16S rRNA. This is Ribosome-binding factor A from Helicobacter pylori (strain G27).